A 480-amino-acid chain; its full sequence is Probable G-protein coupled receptor Mth-like 6 (480 aa).

A signal peptide spans 1 to 20 (MLLNILAIILVFVISSQSEA). Over 21–202 (VIPGCDYFDT…LEHVYIPKSM (182 aa)) the chain is Extracellular. 4 disulfide bridges follow: cysteine 25–cysteine 78, cysteine 80–cysteine 85, cysteine 89–cysteine 179, and cysteine 90–cysteine 101. N-linked (GlcNAc...) asparagine glycosylation is present at asparagine 40. N-linked (GlcNAc...) asparagine glycosylation is found at asparagine 160 and asparagine 170. Residues 203-225 (PAVPQVGTISMVGCILTIAVYLY) traverse the membrane as a helical segment. Residues 226–231 (IKKLRN) lie on the Cytoplasmic side of the membrane. Residues 232–254 (LLGKCFICYVFCKFVQYLIWAGG) traverse the membrane as a helical segment. Over 255-263 (DLNLWNNIC) the chain is Extracellular. A helical membrane pass occupies residues 264 to 283 (SLAGYTNYFFALASHFWLSV). Residues 284–303 (MSHQIWKNLRLINRDERSYH) are Cytoplasmic-facing. Residues 304 to 326 (FLIYNIYGWGTPAIMTAITYLVD) traverse the membrane as a helical segment. The Extracellular segment spans residues 327 to 356 (WAWEDRPDKLNWIPGVGLYRCWINTYDWSA). Residues 357 to 379 (MIYLYGPMLILSLFNVVTFILTV) form a helical membrane-spanning segment. Residues 380–405 (NHIMKIKSSVKSSTQQQRKCIQNNDF) are Cytoplasmic-facing. Residues 406–428 (LLYLRLSVMMGVTGISEVITYFV) traverse the membrane as a helical segment. The Extracellular segment spans residues 429 to 437 (KRHKFWRQV). Residues 438-457 (LRVPNFFHLGSGIVVFVLFI) traverse the membrane as a helical segment. At 458 to 480 (LKRSTFQMIMERISGPRRQQPAS) the chain is on the cytoplasmic side.

Belongs to the G-protein coupled receptor 2 family. Mth subfamily.

It is found in the cell membrane. The polypeptide is Probable G-protein coupled receptor Mth-like 6 (mthl6) (Drosophila melanogaster (Fruit fly)).